A 379-amino-acid chain; its full sequence is Reducing end xylose-releasing exo-oligoxylanase (379 aa).

The active-site Proton donor is Glu66. The Proton acceptor role is filled by Asp259.

This sequence belongs to the glycosyl hydrolase 8 (cellulase D) family.

The enzyme catalyses Hydrolysis of (1-&gt;4)-beta-D-xylose residues from the reducing end of oligosaccharides.. In terms of biological role, hydrolyzes xylooligosaccharides with a degree of polymerization of greater than or equal to 3, releasing xylose from the reducing end. Has low activity on birchwood xylan, oat spelt xylan and arabinoxylan. This Bifidobacterium adolescentis (strain ATCC 15703 / DSM 20083 / NCTC 11814 / E194a) protein is Reducing end xylose-releasing exo-oligoxylanase.